A 412-amino-acid polypeptide reads, in one-letter code: Alanyl-tRNA editing protein Aarsd1 (412 aa).

Residues His109 and His113 each contribute to the Zn(2+) site. Ser174 carries the phosphoserine modification. The Zn(2+) site is built by Cys209 and His213.

This sequence belongs to the class-II aminoacyl-tRNA synthetase family. Alax-L subfamily. The cofactor is Zn(2+).

The protein localises to the cytoplasm. In terms of biological role, functions in trans to edit the amino acid moiety from incorrectly charged tRNA(Ala). This is Alanyl-tRNA editing protein Aarsd1 (Aarsd1) from Rattus norvegicus (Rat).